A 296-amino-acid polypeptide reads, in one-letter code: tRNA dimethylallyltransferase (296 aa).

Residue 9-16 participates in ATP binding; that stretch reads GPTAVGKT. 11 to 16 contributes to the substrate binding site; that stretch reads TAVGKT. The tract at residues 34 to 37 is interaction with substrate tRNA; the sequence is DSRQ.

Belongs to the IPP transferase family. In terms of assembly, monomer. Mg(2+) is required as a cofactor.

The catalysed reaction is adenosine(37) in tRNA + dimethylallyl diphosphate = N(6)-dimethylallyladenosine(37) in tRNA + diphosphate. Functionally, catalyzes the transfer of a dimethylallyl group onto the adenine at position 37 in tRNAs that read codons beginning with uridine, leading to the formation of N6-(dimethylallyl)adenosine (i(6)A). This chain is tRNA dimethylallyltransferase, found in Chloroflexus aurantiacus (strain ATCC 29366 / DSM 635 / J-10-fl).